We begin with the raw amino-acid sequence, 1049 residues long: Carbamoyl phosphate synthase large chain (1049 aa).

Residues 1–399 (MRESVRKVLV…SLQKAVRMLD (399 aa)) are carboxyphosphate synthetic domain. ATP contacts are provided by Arg-127, Arg-167, Gly-173, Gly-174, Lys-206, Leu-208, Glu-213, Gly-239, Val-240, His-241, Gln-282, and Glu-296. In terms of domain architecture, ATP-grasp 1 spans 131–325 (RETMINVGLP…LAYVSAKLAL (195 aa)). Mg(2+)-binding residues include Gln-282, Glu-296, and Asn-298. Mn(2+) contacts are provided by Gln-282, Glu-296, and Asn-298. Residues 400 to 548 (IGEPGVVGGK…LTYNGTEDDI (149 aa)) are oligomerization domain. A carbamoyl phosphate synthetic domain region spans residues 549-930 (EFSEAGNKLL…LKSWLSSSPN (382 aa)). Positions 674-864 (SKLLDKLGIK…IISLALDGIL (191 aa)) constitute an ATP-grasp 2 domain. ATP contacts are provided by Arg-710, Lys-749, Leu-751, Glu-756, Gly-780, Val-781, His-782, Ser-783, Gln-823, and Glu-835. Residues Gln-823, Glu-835, and Asn-837 each contribute to the Mg(2+) site. Residues Gln-823, Glu-835, and Asn-837 each coordinate Mn(2+). The MGS-like domain occupies 930-1049 (NKIPNKEGIA…YEISEYGAGI (120 aa)). Residues 931 to 1049 (KIPNKEGIAL…YEISEYGAGI (119 aa)) form an allosteric domain region.

The protein belongs to the CarB family. In terms of assembly, composed of two chains; the small (or glutamine) chain promotes the hydrolysis of glutamine to ammonia, which is used by the large (or ammonia) chain to synthesize carbamoyl phosphate. Tetramer of heterodimers (alpha,beta)4. The cofactor is Mg(2+). Mn(2+) serves as cofactor.

It catalyses the reaction hydrogencarbonate + L-glutamine + 2 ATP + H2O = carbamoyl phosphate + L-glutamate + 2 ADP + phosphate + 2 H(+). The enzyme catalyses hydrogencarbonate + NH4(+) + 2 ATP = carbamoyl phosphate + 2 ADP + phosphate + 2 H(+). Its pathway is amino-acid biosynthesis; L-arginine biosynthesis; carbamoyl phosphate from bicarbonate: step 1/1. The protein operates within pyrimidine metabolism; UMP biosynthesis via de novo pathway; (S)-dihydroorotate from bicarbonate: step 1/3. Large subunit of the glutamine-dependent carbamoyl phosphate synthetase (CPSase). CPSase catalyzes the formation of carbamoyl phosphate from the ammonia moiety of glutamine, carbonate, and phosphate donated by ATP, constituting the first step of 2 biosynthetic pathways, one leading to arginine and/or urea and the other to pyrimidine nucleotides. The large subunit (synthetase) binds the substrates ammonia (free or transferred from glutamine from the small subunit), hydrogencarbonate and ATP and carries out an ATP-coupled ligase reaction, activating hydrogencarbonate by forming carboxy phosphate which reacts with ammonia to form carbamoyl phosphate. This is Carbamoyl phosphate synthase large chain from Sulfurisphaera tokodaii (strain DSM 16993 / JCM 10545 / NBRC 100140 / 7) (Sulfolobus tokodaii).